The primary structure comprises 360 residues: Phospho-N-acetylmuramoyl-pentapeptide-transferase (360 aa).

Helical transmembrane passes span 21-41, 73-93, 94-114, 132-152, 168-188, 199-219, 239-259, 263-283, 288-308, and 338-358; these read YLSF…LWMG, TMGG…WADL, TNPY…VGFV, WKYF…YAHG, VMPQ…VGTS, GLAI…AWAT, LVVV…FNTY, VFMG…IAVL, FVLV…ILQV, and VIVR…ATLK.

This sequence belongs to the glycosyltransferase 4 family. MraY subfamily. The cofactor is Mg(2+).

It is found in the cell inner membrane. The enzyme catalyses UDP-N-acetyl-alpha-D-muramoyl-L-alanyl-gamma-D-glutamyl-meso-2,6-diaminopimeloyl-D-alanyl-D-alanine + di-trans,octa-cis-undecaprenyl phosphate = di-trans,octa-cis-undecaprenyl diphospho-N-acetyl-alpha-D-muramoyl-L-alanyl-D-glutamyl-meso-2,6-diaminopimeloyl-D-alanyl-D-alanine + UMP. It functions in the pathway cell wall biogenesis; peptidoglycan biosynthesis. Catalyzes the initial step of the lipid cycle reactions in the biosynthesis of the cell wall peptidoglycan: transfers peptidoglycan precursor phospho-MurNAc-pentapeptide from UDP-MurNAc-pentapeptide onto the lipid carrier undecaprenyl phosphate, yielding undecaprenyl-pyrophosphoryl-MurNAc-pentapeptide, known as lipid I. This is Phospho-N-acetylmuramoyl-pentapeptide-transferase from Vibrio cholerae serotype O1 (strain ATCC 39541 / Classical Ogawa 395 / O395).